Reading from the N-terminus, the 343-residue chain is Protein RecA (343 aa).

Residue 64 to 71 coordinates ATP; the sequence is GPESSGKT.

The protein belongs to the RecA family.

The protein resides in the cytoplasm. Its function is as follows. Can catalyze the hydrolysis of ATP in the presence of single-stranded DNA, the ATP-dependent uptake of single-stranded DNA by duplex DNA, and the ATP-dependent hybridization of homologous single-stranded DNAs. It interacts with LexA causing its activation and leading to its autocatalytic cleavage. The chain is Protein RecA from Bacillus cereus (strain ATCC 10987 / NRS 248).